Consider the following 256-residue polypeptide: Ribosomal RNA small subunit methyltransferase A (256 aa).

6 residues coordinate S-adenosyl-L-methionine: N12, L14, G39, E60, D85, and N103.

It belongs to the class I-like SAM-binding methyltransferase superfamily. rRNA adenine N(6)-methyltransferase family. RsmA subfamily.

Its subcellular location is the cytoplasm. It catalyses the reaction adenosine(1518)/adenosine(1519) in 16S rRNA + 4 S-adenosyl-L-methionine = N(6)-dimethyladenosine(1518)/N(6)-dimethyladenosine(1519) in 16S rRNA + 4 S-adenosyl-L-homocysteine + 4 H(+). Specifically dimethylates two adjacent adenosines (A1518 and A1519) in the loop of a conserved hairpin near the 3'-end of 16S rRNA in the 30S particle. May play a critical role in biogenesis of 30S subunits. The protein is Ribosomal RNA small subunit methyltransferase A of Legionella pneumophila (strain Corby).